The following is a 94-amino-acid chain: UPF0213 protein BH0048 (94 aa).

Positions 1-76 (MNHYVYILEC…KHLSRRKKEQ (76 aa)) constitute a GIY-YIG domain.

The protein belongs to the UPF0213 family.

This is UPF0213 protein BH0048 from Halalkalibacterium halodurans (strain ATCC BAA-125 / DSM 18197 / FERM 7344 / JCM 9153 / C-125) (Bacillus halodurans).